The primary structure comprises 584 residues: Glycosyltransferase family 92 protein Os08g0121900 (584 aa).

The segment covering 1–10 (MALAAKERKL) has biased composition (basic and acidic residues). The interval 1 to 33 (MALAAKERKLSRLGSKGSGGGGGGGSFGARGQR) is disordered. A compositionally biased stretch (gly residues) spans 16–28 (KGSGGGGGGGSFG). A helical membrane pass occupies residues 43–63 (FAAFFAFLFAGAVLFGAAHVI). Residues 314–525 (HSMCVCTMLR…DKFSGRVATY (212 aa)) form the GT92 domain.

Belongs to the glycosyltransferase 92 family.

It localises to the membrane. This is Glycosyltransferase family 92 protein Os08g0121900 from Oryza sativa subsp. japonica (Rice).